Here is a 406-residue protein sequence, read N- to C-terminus: Endoplasmic reticulum resident protein 44 (406 aa).

The N-terminal stretch at 1–29 (MHPAVFLSLPDLRCSLLLLVTWVFTPVTT) is a signal peptide. The 109-residue stretch at 30–138 (EITSLDTENI…VKALADYIRQ (109 aa)) folds into the Thioredoxin domain. Intrachain disulfides connect Cys189–Cys241 and Cys301–Cys318. Residues 236–285 (WIQDKCVPLVREITFENGEELTEEGLPFLILFHMKEDTESLEIFQNEVAR) are interaction with ITPR1. The segment at 360–387 (FHHGPDPTDTAPGEQAQDVASSPPESSF) is disordered. Residues 377-387 (DVASSPPESSF) are compositionally biased toward polar residues. Positions 403-406 (RDEL) match the Prevents secretion from ER motif.

Forms mixed disulfides with both ERO1A and ERO1B and cargo folding intermediates; the interactions with ERO1A and ERO1B result in their retention in the endoplasmic reticulum. Directly interacts with ITPR1 in a pH-, redox state- and calcium-dependent manner, but not with ITPR2 or ITPR3. The strength of this interaction inversely correlates with calcium concentration.

The protein resides in the endoplasmic reticulum lumen. Its function is as follows. Mediates thiol-dependent retention in the early secretory pathway, forming mixed disulfides with substrate proteins through its conserved CRFS motif. Inhibits the calcium channel activity of ITPR1. May have a role in the control of oxidative protein folding in the endoplasmic reticulum. Required to retain ERO1A and ERO1B in the endoplasmic reticulum. The chain is Endoplasmic reticulum resident protein 44 (ERP44) from Homo sapiens (Human).